A 183-amino-acid chain; its full sequence is Ribosome rescue factor SmrB (183 aa).

One can recognise a Smr domain in the interval 98-173 (LDLHGLTQLQ…GDAALLVLIE (76 aa)).

Belongs to the SmrB family. As to quaternary structure, associates with collided ribosomes, but not with correctly translating polysomes.

Functionally, acts as a ribosome collision sensor. Detects stalled/collided disomes (pairs of ribosomes where the leading ribosome is stalled and a second ribosome has collided with it) and endonucleolytically cleaves mRNA at the 5' boundary of the stalled ribosome. Stalled/collided disomes form a new interface (primarily via the 30S subunits) that binds SmrB. Cleaved mRNA becomes available for tmRNA ligation, leading to ribosomal subunit dissociation and rescue of stalled ribosomes. The chain is Ribosome rescue factor SmrB from Salmonella paratyphi A (strain ATCC 9150 / SARB42).